Consider the following 483-residue polypeptide: Isocitrate dehydrogenase [NADP] (483 aa).

Thr74 is a binding site for NADP(+). D-threo-isocitrate is bound by residues Ser83, Asn85, Arg89, Arg99, and Arg121. A Mg(2+)-binding site is contributed by Asp232. Residues 264-270 (HGSAPDI) and Asn277 each bind NADP(+).

Belongs to the isocitrate and isopropylmalate dehydrogenases family. As to quaternary structure, homodimer. It depends on Mg(2+) as a cofactor. The cofactor is Mn(2+).

The catalysed reaction is D-threo-isocitrate + NADP(+) = 2-oxoglutarate + CO2 + NADPH. In terms of biological role, catalyzes the oxidative decarboxylation of isocitrate to 2-oxoglutarate and carbon dioxide with the concomitant reduction of NADP(+). The protein is Isocitrate dehydrogenase [NADP] (icd) of Rickettsia conorii (strain ATCC VR-613 / Malish 7).